We begin with the raw amino-acid sequence, 82 residues long: Putative membrane protein insertion efficiency factor (82 aa).

It belongs to the UPF0161 family.

It localises to the cell inner membrane. Functionally, could be involved in insertion of integral membrane proteins into the membrane. In Rickettsia peacockii (strain Rustic), this protein is Putative membrane protein insertion efficiency factor.